The sequence spans 396 residues: Putative protein IntB (396 aa).

Positions 71 to 151 (RTFKEVAIEW…RTTAIMRYAV (81 aa)) constitute a Core-binding (CB) domain. In terms of domain architecture, Tyr recombinase spans 174-367 (QHRPALELKR…EHLEERRLML (194 aa)). Catalysis depends on residues arginine 213, lysine 252, histidine 316, arginine 319, and histidine 343. Residue tyrosine 353 is the O-(3'-phospho-DNA)-tyrosine intermediate of the active site.

The protein belongs to the 'phage' integrase family.

The chain is Putative protein IntB (intB) from Escherichia coli (strain K12).